The chain runs to 403 residues: Aspartic protease PEP1 (403 aa).

The signal sequence occupies residues 1–20 (MVQISQIGAVLAVCSTLTVA). Residues 21 to 67 (APTKGKARFNVPQVAVPMKAVHHPAVAYARALHKFGMKVPKAVSDAA) constitute a propeptide, activation peptide. The Peptidase A1 domain maps to 82-400 (YVTQVTVGQG…DTEGPRIGFA (319 aa)). Aspartate 98 is an active-site residue. Asparagine 159 and asparagine 270 each carry an N-linked (GlcNAc...) asparagine glycan. The active site involves aspartate 293. Cysteine 329 and cysteine 361 are oxidised to a cystine.

The protein belongs to the peptidase A1 family.

Its subcellular location is the secreted. The catalysed reaction is Hydrolysis of proteins with broad specificity. Generally favors hydrophobic residues in P1 and P1', but also accepts Lys in P1, which leads to activation of trypsinogen. Does not clot milk.. In terms of biological role, secreted aspartic endopeptidase that allows assimilation of proteinaceous substrates. Can catalyze hydrolysis of the major structural proteins of basement membrane, elastin, collagen, and laminin. Thought to play a significant role in virulence. This is Aspartic protease PEP1 (PEP1) from Arthroderma benhamiae (strain ATCC MYA-4681 / CBS 112371) (Trichophyton mentagrophytes).